Here is a 301-residue protein sequence, read N- to C-terminus: Inosose dehydratase (301 aa).

This sequence belongs to the IolE/MocC family. It depends on glutathione as a cofactor. The cofactor is Co(2+). Mn(2+) is required as a cofactor.

It catalyses the reaction scyllo-inosose = 3D-3,5/4-trihydroxycyclohexane-1,2-dione + H2O. Catalyzes the dehydration of inosose (2-keto-myo-inositol, 2KMI or 2,4,6/3,5-pentahydroxycyclohexanone) to 3D-(3,5/4)-trihydroxycyclohexane-1,2-dione (D-2,3-diketo-4-deoxy-epi-inositol). The protein is Inosose dehydratase of Salmonella typhimurium (strain LT2 / SGSC1412 / ATCC 700720).